We begin with the raw amino-acid sequence, 321 residues long: MSTEHVDHKTIARFAEDKVNLPKVKADDFREQAKRLQNKLEGYLSDHPDFSLKRMIPSGSLAKGTALRSLNDIDVAVYISGSDAPQDLRGLLDYLADRLRKAFPNFSPDQVKPQTYSVTVSFRGSGLDVDIVPVLYSGLPDWRGHLISQEDGSFLETSIPLHLDFIKARKRAAPKHFAQVVRLAKYWARLMKQERPNFRFKSFMIELILAKLLDNGVDFSNYPEALQAFFSYLVSTELRERIVFEDNYPASKIGTLSDLVQIIDPVNPVNNVARLYTQSNVDAIIDAAMDAGDAIDAAFYAPTKQLTVTYWQKVFGSSFQG.

Residue Lys-63 participates in ATP binding. Mg(2+) is bound by residues Asp-72 and Asp-74. Residues Asp-74, His-162, Lys-185, 201–203 (KSF), and Asn-270 each bind ATP.

This sequence belongs to the CD-NTase family. A01 subfamily. In terms of assembly, forms complexes with Cap7 with 1:1 and 2:2 stoichimetry, and a 1:1:6 CdnC:Cap7:Cap6 complex. The cofactor is Mg(2+).

It catalyses the reaction 3 ATP = 3',3',3'-c-tri-AMP + 3 diphosphate. It carries out the reaction 2 ATP = 3',3'-c-di-AMP + 2 diphosphate. Its activity is regulated as follows. The 2:2 CdnC:Cap7 (Cap7 is also called HORMA) complex is activated for cAAA synthesis by long dsDNA, but not 40 bp dsDNA or ssDNA; the 1:1 complex is inactive in vitro. The 2:2:DNA complex is catalytically disassembled and inactivated by Cap6 (also called Trip13). Cyclic nucleotide synthase (second messenger synthase) of a CBASS antivirus system. CBASS (cyclic oligonucleotide-based antiphage signaling system) provides immunity against bacteriophage. The CD-NTase protein synthesizes cyclic nucleotides in response to infection; these serve as specific second messenger signals. The signals activate a diverse range of effectors, leading to bacterial cell death and thus abortive phage infection. A type III-C(AAA) CBASS system. In terms of biological role, cyclic nucleotide synthase that upon activation catalyzes the synthesis of 3',3',3'-cyclic AMP-AMP-AMP (3',3',3'-c-tri-AMP or cAAA) as the major product, and 3',3'-c-di-AMP as a minor product. Cannot use GTP as a substrate. Functionally, protects E.coli strain JP313 against bacteriophage lambda cI- infection. When the cdnC-cap7-cap6-nucC operon is transformed into a susceptible strain it confers bacteriophage immunity. Mutations in the sensor (Cap7 also called HORMA) or effector proteins (CdnC, NucC) but not the disassembly protein (Cap6 also called Trip13) no longer confer immunity. The presence of the intact operon leads to culture collapse and cell death, which occurs before the phage has finished its replication cycle, thus protecting non-infected bacteria by aborting the phage infection and preventing its propagation. This chain is Cyclic AMP-AMP-AMP synthase, found in Escherichia coli (strain MS 115-1).